The chain runs to 202 residues: ATP-dependent Clp protease proteolytic subunit (202 aa).

Residue Ser101 is the Nucleophile of the active site. The active site involves His126.

It belongs to the peptidase S14 family. Component of the chloroplastic Clp protease core complex.

Its subcellular location is the plastid. The protein localises to the chloroplast stroma. It catalyses the reaction Hydrolysis of proteins to small peptides in the presence of ATP and magnesium. alpha-casein is the usual test substrate. In the absence of ATP, only oligopeptides shorter than five residues are hydrolyzed (such as succinyl-Leu-Tyr-|-NHMec, and Leu-Tyr-Leu-|-Tyr-Trp, in which cleavage of the -Tyr-|-Leu- and -Tyr-|-Trp bonds also occurs).. Its function is as follows. Cleaves peptides in various proteins in a process that requires ATP hydrolysis. Has a chymotrypsin-like activity. Plays a major role in the degradation of misfolded proteins. The chain is ATP-dependent Clp protease proteolytic subunit from Illicium oligandrum (Star anise).